The following is a 92-amino-acid chain: Conotoxin Mr15.3 (92 aa).

Residues 1–20 form the signal peptide; sequence MSTLKMMLLILLLLLPMATF. A propeptide spanning residues 21–53 is cleaved from the precursor; sequence DSDGQAIPGGGIPSAVNSRVRGDEKSGRSLEKR.

The protein belongs to the conotoxin N superfamily. Contains 4 disulfide bonds. Expressed by the venom duct.

The protein resides in the secreted. The chain is Conotoxin Mr15.3 from Conus marmoreus (Marble cone).